The following is a 357-amino-acid chain: DNA replication and repair protein RecF (357 aa).

Residue 30–37 (GANGSGKT) participates in ATP binding.

It belongs to the RecF family.

Its subcellular location is the cytoplasm. In terms of biological role, the RecF protein is involved in DNA metabolism; it is required for DNA replication and normal SOS inducibility. RecF binds preferentially to single-stranded, linear DNA. It also seems to bind ATP. In Salmonella paratyphi B (strain ATCC BAA-1250 / SPB7), this protein is DNA replication and repair protein RecF.